Here is a 196-residue protein sequence, read N- to C-terminus: Probable GTP-binding protein EngB (196 aa).

Positions 21–195 (DVSEICLIGR…YELINKLLGS (175 aa)) constitute an EngB-type G domain. GTP contacts are provided by residues 29 to 36 (GRSNVGKS), 56 to 60 (GKTRL), 75 to 78 (DAPG), 142 to 145 (TKLD), and 174 to 176 (ISN). Positions 36 and 58 each coordinate Mg(2+).

The protein belongs to the TRAFAC class TrmE-Era-EngA-EngB-Septin-like GTPase superfamily. EngB GTPase family. The cofactor is Mg(2+).

In terms of biological role, necessary for normal cell division and for the maintenance of normal septation. The protein is Probable GTP-binding protein EngB of Mycoplasma capricolum subsp. capricolum (strain California kid / ATCC 27343 / NCTC 10154).